We begin with the raw amino-acid sequence, 529 residues long: tRNA-2-methylthio-N(6)-dimethylallyladenosine synthase (529 aa).

The MTTase N-terminal domain occupies 18–134; sequence RTYQVRTYGC…LPTLLERARH (117 aa). Residues cysteine 27, cysteine 63, cysteine 97, cysteine 171, cysteine 175, and cysteine 178 each coordinate [4Fe-4S] cluster. Residues 157–404 form the Radical SAM core domain; that stretch reads RESAYAGWVS…IELQERISLE (248 aa). The TRAM domain occupies 407-486; it reads QAQVGRTLEL…PHHLIADGAL (80 aa).

It belongs to the methylthiotransferase family. MiaB subfamily. As to quaternary structure, monomer. Requires [4Fe-4S] cluster as cofactor.

The protein resides in the cytoplasm. It carries out the reaction N(6)-dimethylallyladenosine(37) in tRNA + (sulfur carrier)-SH + AH2 + 2 S-adenosyl-L-methionine = 2-methylsulfanyl-N(6)-dimethylallyladenosine(37) in tRNA + (sulfur carrier)-H + 5'-deoxyadenosine + L-methionine + A + S-adenosyl-L-homocysteine + 2 H(+). Its function is as follows. Catalyzes the methylthiolation of N6-(dimethylallyl)adenosine (i(6)A), leading to the formation of 2-methylthio-N6-(dimethylallyl)adenosine (ms(2)i(6)A) at position 37 in tRNAs that read codons beginning with uridine. This is tRNA-2-methylthio-N(6)-dimethylallyladenosine synthase from Mycobacterium sp. (strain KMS).